Reading from the N-terminus, the 208-residue chain is MAKVLYITAHPFNELVSNSMAAGKAFIETYQQQHPEDEVKHIDLFETYIPVIDKDVLTGWGKMSNGETLTDDEQMKVSRLSDILEEFLSADKYVLVTPMWNLSFPPVVKAYIDAISIAGKTFKYSAEGPQGLLTDKKVLHIQSRGGYYTEGPAADFEMGDRYLRTIMTFLGVPSYETIIIEGHNAEPHKTEEIKATSINNAEKLATTF.

FMN contacts are provided by residues 17 to 19 (SNS), 99 to 102 (MWNL), and 143 to 146 (SRGG).

Belongs to the azoreductase type 1 family. In terms of assembly, homodimer. FMN is required as a cofactor.

The enzyme catalyses 2 a quinone + NADH + H(+) = 2 a 1,4-benzosemiquinone + NAD(+). It carries out the reaction N,N-dimethyl-1,4-phenylenediamine + anthranilate + 2 NAD(+) = 2-(4-dimethylaminophenyl)diazenylbenzoate + 2 NADH + 2 H(+). Functionally, quinone reductase that provides resistance to thiol-specific stress caused by electrophilic quinones. In terms of biological role, also exhibits azoreductase activity. Catalyzes the reductive cleavage of the azo bond in aromatic azo compounds to the corresponding amines. The protein is FMN-dependent NADH:quinone oxidoreductase of Staphylococcus aureus (strain MRSA252).